Reading from the N-terminus, the 227-residue chain is Transmembrane emp24 domain-containing protein 4 (227 aa).

An N-terminal signal peptide occupies residues 1-29 (MAGVGAGPLRAMGRQALLLLALCATGAQG). The Lumenal segment spans residues 30–194 (LYFHIGETEK…RLTSESTNQR (165 aa)). A GOLD domain is found at 39-137 (KRCFIEEIPD…KLRVHLDIQV (99 aa)). N-linked (GlcNAc...) asparagine glycosylation is present at N117. A coiled-coil region spans residues 147–176 (IAAKDKLTELQLRARQLLDQVEQIQKEQDY). The helical transmembrane segment at 195–212 (VLWWSIAQTVILILTGIW) threads the bilayer. The Cytoplasmic segment spans residues 213 to 227 (QMRHLKSFFEAKKLV). A COPII vesicle coat-binding motif is present at residues 220 to 221 (FF). Residues 220-227 (FFEAKKLV) carry the COPI vesicle coat-binding motif.

It belongs to the EMP24/GP25L family.

The protein resides in the endoplasmic reticulum membrane. Involved in vesicular protein trafficking, mainly in the early secretory pathway. targeting. Involved in the maintenance of the Golgi apparatus. Appears to play a role in the biosynthesis of secreted cargo including processing. Involved in endoplasmic reticulum stress response. May play a role in the regulation of heat-shock response and apoptosis. The chain is Transmembrane emp24 domain-containing protein 4 (TMED4) from Homo sapiens (Human).